A 20-amino-acid chain; its full sequence is Cathepsin L-like cysteine proteinase (20 aa).

Belongs to the peptidase C1 family.

It is found in the lysosome. Functionally, thiol protease. The polypeptide is Cathepsin L-like cysteine proteinase (Fasciola hepatica (Liver fluke)).